A 198-amino-acid polypeptide reads, in one-letter code: MSNTKTASTGFAELLKDRREQVKMDHAALASLLGETPETVAAWENGEGGELTLTQLGRIAHVLGTSIGALTPPAGNDLDDGVIIQMPDERPILKGVRDNVDYYVYNCLVRTKRAPSLVPLVVDVLTDNPDDAKFNSGHAGNEFLFVLEGEIHMKWGDKENPKEALLPTGASMFVEEHVPHAFTAAKGTGSAKLIAVNF.

Residues 15–70 enclose the HTH cro/C1-type domain; that stretch reads LKDRREQVKMDHAALASLLGETPETVAAWENGEGGELTLTQLGRIAHVLGTSIGAL. Lys-23 is a binding site for substrate. The H-T-H motif DNA-binding region spans 26–45; the sequence is HAALASLLGETPETVAAWEN. Residues Arg-97, Tyr-105, 135–138, and Glu-142 contribute to the substrate site; that span reads NSGH. Residues 136 to 196 form the Cupin type-2 domain; sequence SGHAGNEFLF…GTGSAKLIAV (61 aa). Fe cation is bound by residues His-138, Glu-142, and His-180.

Belongs to the non-heme iron-dependent dioxygenase family. In terms of assembly, homotetramer. Fe(2+) is required as a cofactor.

The catalysed reaction is (S)-2-hydroxypropylphosphonate + H2O2 = (1R,2S)-epoxypropylphosphonate + 2 H2O. Its pathway is antibiotic biosynthesis; fosfomycin biosynthesis. Non-heme-dependent dioxygenase that catalyzes the oxidative epoxidation of (S)-2-hydroxypropylphosphonate into (1R,2S)-epoxypropylphosphonate, the final step in the biosynthesis of fosfomycin antibiotic. This is (S)-2-hydroxypropylphosphonic acid epoxidase (hppE) from Streptomyces wedmorensis.